A 207-amino-acid chain; its full sequence is Small ribosomal subunit protein uS4 (207 aa).

An S4 RNA-binding domain is found at 97–160 (SRLDNVVYRM…KKQARIVEAL (64 aa)).

This sequence belongs to the universal ribosomal protein uS4 family. As to quaternary structure, part of the 30S ribosomal subunit. Contacts protein S5. The interaction surface between S4 and S5 is involved in control of translational fidelity.

In terms of biological role, one of the primary rRNA binding proteins, it binds directly to 16S rRNA where it nucleates assembly of the body of the 30S subunit. With S5 and S12 plays an important role in translational accuracy. The polypeptide is Small ribosomal subunit protein uS4 (Burkholderia mallei (strain NCTC 10247)).